The chain runs to 172 residues: NADH-quinone oxidoreductase subunit B (172 aa).

Positions 42, 43, 107, and 136 each coordinate [4Fe-4S] cluster.

The protein belongs to the complex I 20 kDa subunit family. As to quaternary structure, NDH-1 is composed of 14 different subunits. Subunits NuoB, C, D, E, F, and G constitute the peripheral sector of the complex. It depends on [4Fe-4S] cluster as a cofactor.

Its subcellular location is the cell inner membrane. The enzyme catalyses a quinone + NADH + 5 H(+)(in) = a quinol + NAD(+) + 4 H(+)(out). In terms of biological role, NDH-1 shuttles electrons from NADH, via FMN and iron-sulfur (Fe-S) centers, to quinones in the respiratory chain. The immediate electron acceptor for the enzyme in this species is believed to be ubiquinone. Couples the redox reaction to proton translocation (for every two electrons transferred, four hydrogen ions are translocated across the cytoplasmic membrane), and thus conserves the redox energy in a proton gradient. The polypeptide is NADH-quinone oxidoreductase subunit B (Sulfurovum sp. (strain NBC37-1)).